We begin with the raw amino-acid sequence, 314 residues long: UDP-N-acetylenolpyruvoylglucosamine reductase (314 aa).

The FAD-binding PCMH-type domain maps to K25–G191. The active site involves R170. Catalysis depends on S220, which acts as the Proton donor. E291 is a catalytic residue.

Belongs to the MurB family. Requires FAD as cofactor.

It is found in the cytoplasm. The enzyme catalyses UDP-N-acetyl-alpha-D-muramate + NADP(+) = UDP-N-acetyl-3-O-(1-carboxyvinyl)-alpha-D-glucosamine + NADPH + H(+). It functions in the pathway cell wall biogenesis; peptidoglycan biosynthesis. Cell wall formation. This Heliobacterium modesticaldum (strain ATCC 51547 / Ice1) protein is UDP-N-acetylenolpyruvoylglucosamine reductase.